The primary structure comprises 310 residues: Ribosomal RNA small subunit methyltransferase H (310 aa).

S-adenosyl-L-methionine contacts are provided by residues 35 to 37 (GGH), Asp52, Phe79, Asp100, and Gln107.

The protein belongs to the methyltransferase superfamily. RsmH family.

The protein localises to the cytoplasm. The catalysed reaction is cytidine(1402) in 16S rRNA + S-adenosyl-L-methionine = N(4)-methylcytidine(1402) in 16S rRNA + S-adenosyl-L-homocysteine + H(+). Its function is as follows. Specifically methylates the N4 position of cytidine in position 1402 (C1402) of 16S rRNA. In Anaeromyxobacter sp. (strain Fw109-5), this protein is Ribosomal RNA small subunit methyltransferase H.